A 271-amino-acid polypeptide reads, in one-letter code: Phosphate import ATP-binding protein PstB (271 aa).

In terms of domain architecture, ABC transporter spans 25-266 (FDTKNLNLWY…PSDKRTEDYI (242 aa)). 57–64 (GPSGCGKS) lines the ATP pocket.

Belongs to the ABC transporter superfamily. Phosphate importer (TC 3.A.1.7) family. The complex is composed of two ATP-binding proteins (PstB), two transmembrane proteins (PstC and PstA) and a solute-binding protein (PstS).

It is found in the cell membrane. The catalysed reaction is phosphate(out) + ATP + H2O = ADP + 2 phosphate(in) + H(+). In terms of biological role, part of the ABC transporter complex PstSACB involved in phosphate import. Responsible for energy coupling to the transport system. This chain is Phosphate import ATP-binding protein PstB, found in Bacillus anthracis.